The chain runs to 313 residues: 2-phosphoglycerate kinase (313 aa).

The ATP-cone domain occupies 8-95 (SRILVKDKEY…LWRRVLKKHS (88 aa)).

This sequence belongs to the 2-phosphoglycerate kinase family. It depends on a divalent metal cation as a cofactor.

It carries out the reaction (2R)-2-phosphoglycerate + ATP = (2R)-2,3-bisphosphoglycerate + ADP + H(+). It functions in the pathway thermoadapter biosynthesis; cyclic 2,3-diphosphoglycerate biosynthesis; cyclic 2,3-diphosphoglycerate from 2-phospho-D-glycerate: step 1/2. Functionally, catalyzes the phosphorylation of 2-phosphoglycerate to 2,3-diphosphoglycerate. Involved in the biosynthesis of cyclic 2,3-bisphosphoglycerate, a thermoprotectant. The sequence is that of 2-phosphoglycerate kinase from Methanococcus maripaludis (strain C5 / ATCC BAA-1333).